Reading from the N-terminus, the 161-residue chain is Nucleotide-binding protein GM21_0633 (161 aa).

Belongs to the YajQ family.

Nucleotide-binding protein. This Geobacter sp. (strain M21) protein is Nucleotide-binding protein GM21_0633.